The primary structure comprises 217 residues: EF-hand domain-containing protein D2 homolog (217 aa).

Residues 1–28 (MSVSSNASSASNKDSVDSPSSTTNTDSS) are compositionally biased toward low complexity. The tract at residues 1 to 29 (MSVSSNASSASNKDSVDSPSSTTNTDSSE) is disordered. EF-hand domains are found at residues 69–104 (NQIK…LGAP) and 105–140 (QTHL…AQAG). Residues Asp-82, Asp-86, Glu-93, Asp-118, Asp-120, Asp-122, Lys-124, and Glu-129 each coordinate Ca(2+). Over residues 191 to 204 (EQEERRREEEERAQ) the composition is skewed to basic and acidic residues. The disordered stretch occupies residues 191–217 (EQEERRREEEERAQRRQQFQQRAAIFQ). Positions 206-217 (RQQFQQRAAIFQ) are enriched in low complexity.

The sequence is that of EF-hand domain-containing protein D2 homolog (Swip-1) from Drosophila melanogaster (Fruit fly).